The primary structure comprises 225 residues: Cytidylate kinase (225 aa).

12-20 serves as a coordination point for ATP; sequence GPSGAGKGT.

The protein belongs to the cytidylate kinase family. Type 1 subfamily.

It is found in the cytoplasm. The catalysed reaction is CMP + ATP = CDP + ADP. It carries out the reaction dCMP + ATP = dCDP + ADP. The protein is Cytidylate kinase of Proteus mirabilis (strain HI4320).